A 649-amino-acid polypeptide reads, in one-letter code: tRNA-guanine(15) transglycosylase (649 aa).

Residue Asp-88 is the Nucleophile of the active site. Residues Asp-123 and Ala-194 each coordinate substrate. Positions 280, 282, and 285 each coordinate Zn(2+). The PUA domain occupies 573–648 (KYRIVIDSSV…VAATLRGGLK (76 aa)).

It belongs to the archaeosine tRNA-ribosyltransferase family. Zn(2+) is required as a cofactor.

The catalysed reaction is guanosine(15) in tRNA + 7-cyano-7-deazaguanine = 7-cyano-7-carbaguanosine(15) in tRNA + guanine. The protein operates within tRNA modification; archaeosine-tRNA biosynthesis. In terms of biological role, exchanges the guanine residue with 7-cyano-7-deazaguanine (preQ0) at position 15 in the dihydrouridine loop (D-loop) of archaeal tRNAs. This chain is tRNA-guanine(15) transglycosylase, found in Methanococcus maripaludis (strain C6 / ATCC BAA-1332).